We begin with the raw amino-acid sequence, 210 residues long: Urease accessory protein UreG (210 aa).

15–22 (GPVGSGKT) serves as a coordination point for GTP.

It belongs to the SIMIBI class G3E GTPase family. UreG subfamily. In terms of assembly, homodimer. UreD, UreF and UreG form a complex that acts as a GTP-hydrolysis-dependent molecular chaperone, activating the urease apoprotein by helping to assemble the nickel containing metallocenter of UreC. The UreE protein probably delivers the nickel.

It is found in the cytoplasm. Functionally, facilitates the functional incorporation of the urease nickel metallocenter. This process requires GTP hydrolysis, probably effectuated by UreG. The chain is Urease accessory protein UreG from Ralstonia nicotianae (strain ATCC BAA-1114 / GMI1000) (Ralstonia solanacearum).